Consider the following 623-residue polypeptide: Glutathione import ATP-binding protein GsiA (623 aa).

2 ABC transporter domains span residues 15 to 269 and 314 to 564; these read VENL…RALL and LRVR…RKLL. ATP-binding positions include 49–56 and 357–364; these read GESGSGKS.

Belongs to the ABC transporter superfamily. Glutathione importer (TC 3.A.1.5.11) family. The complex is composed of two ATP-binding proteins (GsiA), two transmembrane proteins (GsiC and GsiD) and a solute-binding protein (GsiB).

It localises to the cell inner membrane. The enzyme catalyses glutathione(out) + ATP + H2O = glutathione(in) + ADP + phosphate + H(+). In terms of biological role, part of the ABC transporter complex GsiABCD involved in glutathione import. Responsible for energy coupling to the transport system. This is Glutathione import ATP-binding protein GsiA from Shigella dysenteriae serotype 1 (strain Sd197).